The following is a 379-amino-acid chain: Cobalt-precorrin-5B C(1)-methyltransferase (379 aa).

Belongs to the CbiD family.

The enzyme catalyses Co-precorrin-5B + S-adenosyl-L-methionine = Co-precorrin-6A + S-adenosyl-L-homocysteine. The protein operates within cofactor biosynthesis; adenosylcobalamin biosynthesis; cob(II)yrinate a,c-diamide from sirohydrochlorin (anaerobic route): step 6/10. In terms of biological role, catalyzes the methylation of C-1 in cobalt-precorrin-5B to form cobalt-precorrin-6A. The polypeptide is Cobalt-precorrin-5B C(1)-methyltransferase (Salmonella heidelberg (strain SL476)).